Consider the following 339-residue polypeptide: NADH-quinone oxidoreductase subunit H (339 aa).

The next 9 helical transmembrane spans lie at 9-29, 50-70, 82-102, 115-135, 161-181, 187-207, 235-255, 275-295, and 311-331; these read IFPLIIIALKVVAITIPLILC, PNVVGPFGLLQPIADAVKLLF, ILFILAPMITFILSLIGWAVI, VGVLYILAISSLSVYGIIIAG, MGLVIITVLLTTGTLNLSEII, IPWWIDLMLLPMGVVFFISVL, MGFALFFLGEYANMILVSAMT, IPGFFWFVFKVGFLLFCFLWI, and GWKVFLPLTLFWVVLVSSVLV.

Belongs to the complex I subunit 1 family. As to quaternary structure, NDH-1 is composed of 14 different subunits. Subunits NuoA, H, J, K, L, M, N constitute the membrane sector of the complex.

The protein localises to the cell inner membrane. The enzyme catalyses a quinone + NADH + 5 H(+)(in) = a quinol + NAD(+) + 4 H(+)(out). In terms of biological role, NDH-1 shuttles electrons from NADH, via FMN and iron-sulfur (Fe-S) centers, to quinones in the respiratory chain. The immediate electron acceptor for the enzyme in this species is believed to be ubiquinone. Couples the redox reaction to proton translocation (for every two electrons transferred, four hydrogen ions are translocated across the cytoplasmic membrane), and thus conserves the redox energy in a proton gradient. This subunit may bind ubiquinone. This is NADH-quinone oxidoreductase subunit H from Rickettsia rickettsii (strain Iowa).